The following is a 372-amino-acid chain: Hydrogenase-1 small chain (372 aa).

The tat-type signal signal peptide spans 1–45 (MNNEETFYQAMRRQGVTRRSFLKYCSLAATSLGLGAGMAPKIAWA). At 46-325 (LENKPRIPVV…PQMGTHSTAD (280 aa)) the chain is on the periplasmic side. Residues C62, C65, C160, C194, H232, C235, C260, and C266 each coordinate [4Fe-4S] cluster. Residues C275, C294, and C297 each coordinate [3Fe-4S] cluster. Residues 326–346 (TVGLTALGVVAAAVGVHAVAS) traverse the membrane as a helical segment. The disordered stretch occupies residues 346 to 372 (SSVDQRRRHNQQPTETEHQPGNEDKQA). Topologically, residues 347–372 (SVDQRRRHNQQPTETEHQPGNEDKQA) are cytoplasmic. Over residues 360 to 372 (ETEHQPGNEDKQA) the composition is skewed to basic and acidic residues.

This sequence belongs to the [NiFe]/[NiFeSe] hydrogenase small subunit family. In terms of assembly, heterodimer of a large and a small subunit. [4Fe-4S] cluster serves as cofactor. Requires [3Fe-4S] cluster as cofactor. In terms of processing, predicted to be exported by the Tat system. The position of the signal peptide cleavage has not been experimentally proven.

The protein localises to the cell inner membrane. The catalysed reaction is H2 + A = AH2. Its function is as follows. This is one of three S.flexneri hydrogenases synthesized in response to different physiological conditions. HYD1 is believed to have a role in hydrogen cycling during fermentative growth. In Shigella flexneri, this protein is Hydrogenase-1 small chain (hyaA).